The following is a 434-amino-acid chain: V-type ATP synthase beta chain (434 aa).

The protein belongs to the ATPase alpha/beta chains family.

Produces ATP from ADP in the presence of a proton gradient across the membrane. The V-type beta chain is a regulatory subunit. This chain is V-type ATP synthase beta chain (atpB), found in Borreliella burgdorferi (strain ATCC 35210 / DSM 4680 / CIP 102532 / B31) (Borrelia burgdorferi).